A 436-amino-acid polypeptide reads, in one-letter code: Chorismate synthase, chloroplastic (436 aa).

The segment at 1–24 (MASSSLTSKSILGSTKLGSSSLPS) is disordered. Residues 1–50 (MASSSLTSKSILGSTKLGSSSLPSELRRLSSPAVQISLRTQTRKNFQIQA) constitute a chloroplast transit peptide.

This sequence belongs to the chorismate synthase family. As to quaternary structure, homotetramer. The cofactor is FMNH2.

It localises to the plastid. The protein resides in the chloroplast. The enzyme catalyses 5-O-(1-carboxyvinyl)-3-phosphoshikimate = chorismate + phosphate. Its pathway is metabolic intermediate biosynthesis; chorismate biosynthesis; chorismate from D-erythrose 4-phosphate and phosphoenolpyruvate: step 7/7. Its function is as follows. Catalyzes the last common step of the biosynthesis of aromatic amino acids, produced via the shikimic acid pathway. This is Chorismate synthase, chloroplastic (EMB1144) from Arabidopsis thaliana (Mouse-ear cress).